The primary structure comprises 102 residues: Secreted RxLR effector protein 61 (102 aa).

An N-terminal signal peptide occupies residues 1 to 22; sequence MAFQLRIVQHLLHITFLRLPLA. Positions 51–60 match the RxLR-dEER motif; it reads RRLRQLNEHR.

The protein belongs to the RxLR effector family.

Its subcellular location is the secreted. The protein resides in the host chloroplast envelope. It localises to the host cytoplasm. The protein localises to the host nucleus. Effector that partially suppresses the tobacco programmed cell death induced by cell death-inducing proteins. The polypeptide is Secreted RxLR effector protein 61 (Plasmopara viticola (Downy mildew of grapevine)).